The chain runs to 603 residues: Probable NOT transcription complex subunit VIP2 (603 aa).

Polar residues-rich tracts occupy residues 1–28 (MQGT…NNLS) and 36–70 (NLPS…PGYS). 4 disordered regions span residues 1-70 (MQGT…PGYS), 212-242 (NDGS…LGSL), 306-335 (AGFN…GGVS), and 355-377 (SSHS…PLNS). The segment covering 312–335 (GTYSSNRPQQQLQHAPSVSSGGVS) has biased composition (polar residues).

The protein belongs to the CNOT2/3/5 family. As to quaternary structure, binds to VIP1. Interacts with Agrobacterium tumefaciens VirE2. Forms a complex made of Agrobacterium VirE2, VIP1, VIP2 and single-stranded DNA (ssDNA).

The protein resides in the nucleus. In terms of biological role, transcriptional regulator required for Agrobacterium-mediated stable genetic transformation by T-DNA integration in host genome, but not for T-DNA transient expression. This Nicotiana benthamiana protein is Probable NOT transcription complex subunit VIP2 (VIP2).